We begin with the raw amino-acid sequence, 154 residues long: Large ribosomal subunit protein eL24 (154 aa).

The tract at residues 92-154 is disordered; sequence AKRNQKPEVR…AAAPRVGGKR (63 aa). Residues 96 to 122 show a composition bias toward basic and acidic residues; that stretch reads QKPEVRKAQREQAVKAAKEKKKADQVG. The span at 129 to 154 shows a compositional bias: low complexity; sequence KARATAPKTKAPKTVKAAAPRVGGKR.

The protein belongs to the eukaryotic ribosomal protein eL24 family.

The polypeptide is Large ribosomal subunit protein eL24 (RPL24) (Branchiostoma belcheri (Amphioxus)).